Reading from the N-terminus, the 93-residue chain is UPF0250 protein PA3998 (93 aa).

This sequence belongs to the UPF0250 family.

This chain is UPF0250 protein PA3998, found in Pseudomonas aeruginosa (strain ATCC 15692 / DSM 22644 / CIP 104116 / JCM 14847 / LMG 12228 / 1C / PRS 101 / PAO1).